The sequence spans 217 residues: MNQSLLTPFGNPFQRVEQALSALQQGNGVLVVDDEDRENEGDLIFSAEKMTPQQMALMIRECSGIVCLCLTEERIRQLALPMMVEHNTSANQTGFTVTIEAARGVTTGVSAQDRITTIRTAIADGAVASDLNRPGHVFPLRARAGGVLTRRGHTEATIDLMKLAGLKPYGVLCEVQNEDGSMARLPGIVEFANKHNMPVLCIEDLVAYLTENAKAAG.

Residues 37–38 (RE), D42, 150–154 (RRGHT), and E174 contribute to the D-ribulose 5-phosphate site. E38 provides a ligand contact to Mg(2+). H153 is a Mg(2+) binding site.

The protein belongs to the DHBP synthase family. In terms of assembly, homodimer. The cofactor is Mg(2+). Mn(2+) is required as a cofactor.

It carries out the reaction D-ribulose 5-phosphate = (2S)-2-hydroxy-3-oxobutyl phosphate + formate + H(+). The protein operates within cofactor biosynthesis; riboflavin biosynthesis; 2-hydroxy-3-oxobutyl phosphate from D-ribulose 5-phosphate: step 1/1. Its function is as follows. Catalyzes the conversion of D-ribulose 5-phosphate to formate and 3,4-dihydroxy-2-butanone 4-phosphate. This is 3,4-dihydroxy-2-butanone 4-phosphate synthase from Tolumonas auensis (strain DSM 9187 / NBRC 110442 / TA 4).